The chain runs to 465 residues: tRNA modification GTPase MnmE (465 aa).

The (6S)-5-formyl-5,6,7,8-tetrahydrofolate site is built by Arg30, Glu92, and Arg132. The region spanning 227-388 is the TrmE-type G domain; it reads GLQVALVGRP…LIEAVLKTCG (162 aa). Position 237 (Asn237) interacts with K(+). GTP is bound by residues 237 to 242, 256 to 262, 281 to 284, and 342 to 345; these read NVGKSS, TDLPGTT, DTAG, and NKAD. Ser241 is a binding site for Mg(2+). K(+) is bound by residues Thr256, Leu258, and Thr261. Residue Thr262 participates in Mg(2+) binding. Lys465 is a binding site for (6S)-5-formyl-5,6,7,8-tetrahydrofolate.

Belongs to the TRAFAC class TrmE-Era-EngA-EngB-Septin-like GTPase superfamily. TrmE GTPase family. As to quaternary structure, homodimer. Heterotetramer of two MnmE and two MnmG subunits. Requires K(+) as cofactor.

It localises to the cytoplasm. Functionally, exhibits a very high intrinsic GTPase hydrolysis rate. Involved in the addition of a carboxymethylaminomethyl (cmnm) group at the wobble position (U34) of certain tRNAs, forming tRNA-cmnm(5)s(2)U34. This chain is tRNA modification GTPase MnmE, found in Prochlorococcus marinus (strain MIT 9303).